Consider the following 117-residue polypeptide: UPF0122 protein TTE1463 (117 aa).

This sequence belongs to the UPF0122 family.

In terms of biological role, might take part in the signal recognition particle (SRP) pathway. This is inferred from the conservation of its genetic proximity to ftsY/ffh. May be a regulatory protein. The polypeptide is UPF0122 protein TTE1463 (Caldanaerobacter subterraneus subsp. tengcongensis (strain DSM 15242 / JCM 11007 / NBRC 100824 / MB4) (Thermoanaerobacter tengcongensis)).